The sequence spans 213 residues: Chromosome segregation in meiosis protein 2 (213 aa).

It belongs to the CSM2 family. Component of the SHU complex composed of at least CSM2, PSY3, SHU1 and SHU2.

It is found in the cytoplasm. It localises to the nucleus. Involved in chromosome segregation during meiosis. Promotes efficient recombinational repair and functions in the protection of the genome from spontaneous and induced DNA damage like mutations and gross chromosomal rearrangements (GCRs). The protein is Chromosome segregation in meiosis protein 2 (CSM2) of Saccharomyces cerevisiae (strain ATCC 204508 / S288c) (Baker's yeast).